Reading from the N-terminus, the 54-residue chain is Large ribosomal subunit protein bL33 (54 aa).

Belongs to the bacterial ribosomal protein bL33 family.

The polypeptide is Large ribosomal subunit protein bL33 (Opitutus terrae (strain DSM 11246 / JCM 15787 / PB90-1)).